The chain runs to 357 residues: Dihydroorotate dehydrogenase (quinone) (357 aa).

Residues 66–70 (AGFDK) and Thr90 contribute to the FMN site. Residue Lys70 coordinates substrate. A substrate-binding site is contributed by 115-119 (NRMGF). Asn143 and Asn176 together coordinate FMN. Asn176 lines the substrate pocket. Ser179 acts as the Nucleophile in catalysis. Asn181 is a substrate binding site. FMN contacts are provided by Lys212 and Thr240. Position 241 to 242 (241 to 242 (NT)) interacts with substrate. Residues Gly264, Gly293, and 314 to 315 (YT) each bind FMN.

This sequence belongs to the dihydroorotate dehydrogenase family. Type 2 subfamily. Monomer. Requires FMN as cofactor.

The protein localises to the cell membrane. It catalyses the reaction (S)-dihydroorotate + a quinone = orotate + a quinol. Its pathway is pyrimidine metabolism; UMP biosynthesis via de novo pathway; orotate from (S)-dihydroorotate (quinone route): step 1/1. In terms of biological role, catalyzes the conversion of dihydroorotate to orotate with quinone as electron acceptor. The polypeptide is Dihydroorotate dehydrogenase (quinone) (Mycobacterium bovis (strain BCG / Pasteur 1173P2)).